The following is a 101-amino-acid chain: opdI (101 aa).

Residues 30-49 (GGMGGALKIVFLGMMTYFIA) form a helical membrane-spanning segment. Residues 56–101 (SQHPPTDFNAPVQSVPQRAQRPSDTRLQGPVLLASNHPSGDSASPE) are disordered. Polar residues-rich tracts occupy residues 66-81 (PVQS…SDTR) and 91-101 (NHPSGDSASPE).

It is found in the membrane. In terms of biological role, part of the gene cluster that mediates the biosynthesis of oxopyrrolidines, polyketide-amino acid hybrid compounds with feature structures of tetramic acid. Does not seem to play a role in oxopyrrolidines A and B biosynthesis. This chain is opdI, found in Penicillium oxalicum (strain 114-2 / CGMCC 5302) (Penicillium decumbens).